We begin with the raw amino-acid sequence, 384 residues long: MSEQLVTPENVTTKDGKINLLDLNRQQMREFFKDLGEKPFRADQVMKWMYHYCCDNFDEMTDINKVLRGKLKEVAEIRAPEVVEEQRSSDGTIKWAIAVGDQRVETVYIPEDDRATLCVSSQVGCALECKFCSTAQQGFNRNLRVSEIIGQVWRAAKIVGAAKVTGQRPITNVVMMGMGEPLLNLNNVVPAMEIMLDDFGFGLSKRRVTLSTSGVVPALDKLGDMIDVALAISLHAPNDEIRDEIVPINKKYNIETFLAAVRCYLEKSNANQGRVTIEYVMLDHVNDGTEHAHQLAELLKDTPCKINLIPWNPFPGAPYGRSSNSRIDRFSKVLMSYGFTTIVRKTRGDDIDAACGQLAGDVIDRTKRTLRKRMQGEAIDIKAV.

E105 (proton acceptor) is an active-site residue. Residues 111–350 form the Radical SAM core domain; sequence EDDRATLCVS…TIVRKTRGDD (240 aa). An intrachain disulfide couples C118 to C355. C125, C129, and C132 together coordinate [4Fe-4S] cluster. Residues 179–180, S211, 233–235, and N312 each bind S-adenosyl-L-methionine; these read GE and SLH. C355 (S-methylcysteine intermediate) is an active-site residue.

This sequence belongs to the radical SAM superfamily. RlmN family. The cofactor is [4Fe-4S] cluster.

Its subcellular location is the cytoplasm. The catalysed reaction is adenosine(2503) in 23S rRNA + 2 reduced [2Fe-2S]-[ferredoxin] + 2 S-adenosyl-L-methionine = 2-methyladenosine(2503) in 23S rRNA + 5'-deoxyadenosine + L-methionine + 2 oxidized [2Fe-2S]-[ferredoxin] + S-adenosyl-L-homocysteine. The enzyme catalyses adenosine(37) in tRNA + 2 reduced [2Fe-2S]-[ferredoxin] + 2 S-adenosyl-L-methionine = 2-methyladenosine(37) in tRNA + 5'-deoxyadenosine + L-methionine + 2 oxidized [2Fe-2S]-[ferredoxin] + S-adenosyl-L-homocysteine. Its function is as follows. Specifically methylates position 2 of adenine 2503 in 23S rRNA and position 2 of adenine 37 in tRNAs. m2A2503 modification seems to play a crucial role in the proofreading step occurring at the peptidyl transferase center and thus would serve to optimize ribosomal fidelity. This Escherichia coli O17:K52:H18 (strain UMN026 / ExPEC) protein is Dual-specificity RNA methyltransferase RlmN.